The chain runs to 581 residues: NADH-quinone oxidoreductase subunit C/D (581 aa).

Positions 1–172 (MSAVELVNEL…PPFVMTAARF (172 aa)) are NADH dehydrogenase I subunit C. The interval 196 to 581 (ELMILNYGPH…IDYVMSDVDR (386 aa)) is NADH dehydrogenase I subunit D.

The protein in the N-terminal section; belongs to the complex I 30 kDa subunit family. In the C-terminal section; belongs to the complex I 49 kDa subunit family. NDH-1 is composed of 13 different subunits. Subunits NuoB, CD, E, F, and G constitute the peripheral sector of the complex.

Its subcellular location is the cell inner membrane. It catalyses the reaction a quinone + NADH + 5 H(+)(in) = a quinol + NAD(+) + 4 H(+)(out). NDH-1 shuttles electrons from NADH, via FMN and iron-sulfur (Fe-S) centers, to quinones in the respiratory chain. The immediate electron acceptor for the enzyme in this species is believed to be ubiquinone. Couples the redox reaction to proton translocation (for every two electrons transferred, four hydrogen ions are translocated across the cytoplasmic membrane), and thus conserves the redox energy in a proton gradient. This chain is NADH-quinone oxidoreductase subunit C/D, found in Rhodopseudomonas palustris (strain BisB18).